The following is a 602-amino-acid chain: Elongation factor 4 (602 aa).

Residues 7–189 (ARLRNFCIIA…SVVDRIPPPK (183 aa)) enclose the tr-type G domain. Residues 19 to 24 (DHGKST) and 136 to 139 (NKVD) each bind GTP.

This sequence belongs to the TRAFAC class translation factor GTPase superfamily. Classic translation factor GTPase family. LepA subfamily.

Its subcellular location is the cell inner membrane. It carries out the reaction GTP + H2O = GDP + phosphate + H(+). Required for accurate and efficient protein synthesis under certain stress conditions. May act as a fidelity factor of the translation reaction, by catalyzing a one-codon backward translocation of tRNAs on improperly translocated ribosomes. Back-translocation proceeds from a post-translocation (POST) complex to a pre-translocation (PRE) complex, thus giving elongation factor G a second chance to translocate the tRNAs correctly. Binds to ribosomes in a GTP-dependent manner. This is Elongation factor 4 from Prochlorococcus marinus (strain SARG / CCMP1375 / SS120).